The primary structure comprises 616 residues: Dihydroxy-acid dehydratase (616 aa).

A Mg(2+)-binding site is contributed by aspartate 81. Cysteine 122 serves as a coordination point for [2Fe-2S] cluster. Mg(2+)-binding residues include aspartate 123 and lysine 124. The residue at position 124 (lysine 124) is an N6-carboxylysine. [2Fe-2S] cluster is bound at residue cysteine 195. Glutamate 491 is a Mg(2+) binding site. The active-site Proton acceptor is the serine 517.

The protein belongs to the IlvD/Edd family. In terms of assembly, homodimer. The cofactor is [2Fe-2S] cluster. It depends on Mg(2+) as a cofactor.

It carries out the reaction (2R)-2,3-dihydroxy-3-methylbutanoate = 3-methyl-2-oxobutanoate + H2O. The catalysed reaction is (2R,3R)-2,3-dihydroxy-3-methylpentanoate = (S)-3-methyl-2-oxopentanoate + H2O. It participates in amino-acid biosynthesis; L-isoleucine biosynthesis; L-isoleucine from 2-oxobutanoate: step 3/4. Its pathway is amino-acid biosynthesis; L-valine biosynthesis; L-valine from pyruvate: step 3/4. Functions in the biosynthesis of branched-chain amino acids. Catalyzes the dehydration of (2R,3R)-2,3-dihydroxy-3-methylpentanoate (2,3-dihydroxy-3-methylvalerate) into 2-oxo-3-methylpentanoate (2-oxo-3-methylvalerate) and of (2R)-2,3-dihydroxy-3-methylbutanoate (2,3-dihydroxyisovalerate) into 2-oxo-3-methylbutanoate (2-oxoisovalerate), the penultimate precursor to L-isoleucine and L-valine, respectively. This chain is Dihydroxy-acid dehydratase, found in Yersinia pseudotuberculosis serotype I (strain IP32953).